The primary structure comprises 67 residues: Protein AaeX (67 aa).

2 helical membrane-spanning segments follow: residues 10–30 and 43–63; these read FGLS…LFFV and FVWH…YLLF.

The protein belongs to the AaeX family.

Its subcellular location is the cell membrane. The chain is Protein AaeX from Pectobacterium carotovorum subsp. carotovorum (strain PC1).